The sequence spans 150 residues: PTS system galactitol-specific EIIA component (150 aa).

The PTS EIIA type-2 domain occupies 1-144 (MTNLFVRSGI…TQLKEYFTKY (144 aa)). Residue His62 is the Tele-phosphohistidine intermediate of the active site. A Phosphohistidine; by HPr modification is found at His62.

As to quaternary structure, forms a complex with one each of subunit of GatA, GatB and 2 subunits of GatC.

The protein resides in the cytoplasm. The phosphoenolpyruvate-dependent sugar phosphotransferase system (sugar PTS), a major carbohydrate active transport system, catalyzes the phosphorylation of incoming sugar substrates concomitantly with their translocation across the cell membrane. The enzyme II complex composed of GatA, GatB and GatC is involved in galactitol transport. The chain is PTS system galactitol-specific EIIA component (gatA) from Escherichia coli O157:H7.